Reading from the N-terminus, the 25-residue chain is Ocellatin-P1 (25 aa).

Leucine 25 carries the post-translational modification Leucine amide.

In terms of tissue distribution, expressed by the skin glands.

The protein resides in the secreted. Its function is as follows. Antibacterial peptide that inhibits reference strains of both Gram-negative bacteria (E.coli, E.cloacae, K.pneumoniae, P.aeruginosa) and Gram-positive bacteria (S.aureus, S.epidermidis, E.faecalis, Streptococcus group B) with relatively low potencies (MIC=25-200 uM). The peptide shows very low hemolytic activity against human erythrocytes. Wheel projection demonstrates the amphipathicity of the alpha-helices is low which may explain the low antibacterial potency. This Leptodactylus pentadactylus (Smokey jungle frog) protein is Ocellatin-P1.